We begin with the raw amino-acid sequence, 146 residues long: Holo-[acyl-carrier-protein] synthase (146 aa).

Residues D9 and E58 each contribute to the Mg(2+) site.

It belongs to the P-Pant transferase superfamily. AcpS family. Mg(2+) serves as cofactor.

The protein resides in the cytoplasm. It catalyses the reaction apo-[ACP] + CoA = holo-[ACP] + adenosine 3',5'-bisphosphate + H(+). Functionally, transfers the 4'-phosphopantetheine moiety from coenzyme A to a Ser of acyl-carrier-protein. This is Holo-[acyl-carrier-protein] synthase from Baumannia cicadellinicola subsp. Homalodisca coagulata.